We begin with the raw amino-acid sequence, 229 residues long: Probable methylthioribulose-1-phosphate dehydratase (229 aa).

Cys-97 lines the substrate pocket. Positions 115 and 117 each coordinate Zn(2+). Residue Glu-139 is the Proton donor/acceptor of the active site. His-195 is a Zn(2+) binding site.

It belongs to the aldolase class II family. MtnB subfamily. Zn(2+) serves as cofactor.

It localises to the cytoplasm. The catalysed reaction is 5-(methylsulfanyl)-D-ribulose 1-phosphate = 5-methylsulfanyl-2,3-dioxopentyl phosphate + H2O. The protein operates within amino-acid biosynthesis; L-methionine biosynthesis via salvage pathway; L-methionine from S-methyl-5-thio-alpha-D-ribose 1-phosphate: step 2/6. Functionally, catalyzes the dehydration of methylthioribulose-1-phosphate (MTRu-1-P) into 2,3-diketo-5-methylthiopentyl-1-phosphate (DK-MTP-1-P). The protein is Probable methylthioribulose-1-phosphate dehydratase of Acyrthosiphon pisum (Pea aphid).